The sequence spans 434 residues: Glutamate-1-semialdehyde 2,1-aminomutase (434 aa).

Lys267 bears the N6-(pyridoxal phosphate)lysine mark.

Belongs to the class-III pyridoxal-phosphate-dependent aminotransferase family. HemL subfamily. In terms of assembly, homodimer. The cofactor is pyridoxal 5'-phosphate.

It localises to the cytoplasm. It catalyses the reaction (S)-4-amino-5-oxopentanoate = 5-aminolevulinate. It functions in the pathway porphyrin-containing compound metabolism; protoporphyrin-IX biosynthesis; 5-aminolevulinate from L-glutamyl-tRNA(Glu): step 2/2. Its pathway is porphyrin-containing compound metabolism; chlorophyll biosynthesis. The polypeptide is Glutamate-1-semialdehyde 2,1-aminomutase (Roseiflexus castenholzii (strain DSM 13941 / HLO8)).